The following is a 186-amino-acid chain: NADH dehydrogenase [ubiquinone] 1 beta subcomplex subunit 8, mitochondrial (186 aa).

The N-terminal 28 residues, 1 to 28, are a transit peptide targeting the mitochondrion; the sequence is MAVARAGVLGVQWLQRASRNVMPLGART. Residues 133–153 traverse the membrane as a helical segment; that stretch reads LFGFLAFMIFMCWVGDVYPVY.

Belongs to the complex I NDUFB8 subunit family. In terms of assembly, complex I is composed of 45 different subunits.

Its subcellular location is the mitochondrion inner membrane. Functionally, accessory subunit of the mitochondrial membrane respiratory chain NADH dehydrogenase (Complex I), that is believed not to be involved in catalysis. Complex I functions in the transfer of electrons from NADH to the respiratory chain. The immediate electron acceptor for the enzyme is believed to be ubiquinone. The polypeptide is NADH dehydrogenase [ubiquinone] 1 beta subcomplex subunit 8, mitochondrial (NDUFB8) (Homo sapiens (Human)).